The following is a 197-amino-acid chain: Inner membrane protein p54 (197 aa).

The helical transmembrane segment at 32–52 threads the bilayer; that stretch reads YTILIAIVVLVIIIIVLIYLF. The disordered stretch occupies residues 84–123; the sequence is PQPGTSKPAGATTASVGKPVTGRPATNRPVTDRPATNNPV. A run of 4 repeats spans residues 139 to 142, 143 to 146, 147 to 150, and 151 to 154. A 4 X 4 AA tandem repeats of A-A-A-S region spans residues 139 to 154; that stretch reads AAASAAASAAASAAAS. Positions 163 to 175 are interaction with host DYNLL1; sequence YTTVTTQNTASQT.

The protein belongs to the asfivirus envelope protein p54 family. Interacts with the host light chain cytoplasmic dynein DYNLL1; this interaction is critical for intracellular microtubule-dependent virus transport toward viral factories.

It localises to the virion membrane. The protein resides in the host cytoplasm. Its subcellular location is the host cytoskeleton. The protein localises to the host endoplasmic reticulum membrane. Inner envelope protein involved, through its interaction with host dynein, in the intracellular microtubule-dependent transport of viral capsid toward viral factories. Seems to induce caspase-3 activation and apoptosis. Plays a role in virion morphogenesis by recruiting and transforming the host ER membranes into the precursors of the viral envelope. Involved in virus attachment to the host cell. This is Inner membrane protein p54 from African swine fever virus (isolate Tick/South Africa/Pretoriuskop Pr4/1996) (ASFV).